Reading from the N-terminus, the 259-residue chain is Acetylglutamate kinase (259 aa).

Residues 45–46 (GG), arginine 67, and asparagine 159 each bind substrate.

It belongs to the acetylglutamate kinase family. ArgB subfamily.

It is found in the cytoplasm. It catalyses the reaction N-acetyl-L-glutamate + ATP = N-acetyl-L-glutamyl 5-phosphate + ADP. It participates in amino-acid biosynthesis; L-arginine biosynthesis; N(2)-acetyl-L-ornithine from L-glutamate: step 2/4. In terms of biological role, catalyzes the ATP-dependent phosphorylation of N-acetyl-L-glutamate. This chain is Acetylglutamate kinase, found in Aeromonas hydrophila subsp. hydrophila (strain ATCC 7966 / DSM 30187 / BCRC 13018 / CCUG 14551 / JCM 1027 / KCTC 2358 / NCIMB 9240 / NCTC 8049).